We begin with the raw amino-acid sequence, 560 residues long: Choline/ethanolamine transporter FLVCR1 (560 aa).

Positions 1-22 (MVKLNDEEGAAMAPGHQPTNGY) are disordered. Topologically, residues 1–99 (MVKLNDEEGA…TPGTEGSPAP (99 aa)) are cytoplasmic. Ser-56 bears the Phosphoserine mark. Positions 68–99 (QTPLAPEEETQTRLLPTGPGEETPGTEGSPAP) are disordered. A compositionally biased stretch (low complexity) spans 83-95 (PTGPGEETPGTEG). The chain crosses the membrane as a helical span at residues 100 to 124 (QTALSARRFVVLLIFSLYSLVNAFQ). Residues 125-142 (WIQYSVISNVFEGFYGVS) are Extracellular-facing. The helical transmembrane segment at 143 to 170 (SLHIDWLSMVYMLAYVPLIFPATWLLDT) threads the bilayer. Topologically, residues 171 to 172 (RG) are cytoplasmic. A helical transmembrane segment spans residues 173 to 192 (LRLTALLGSGLNCLGAWVKC). The Extracellular segment spans residues 193–199 (ASVQQHL). A helical membrane pass occupies residues 200–228 (FWVTMLGQCLCSVAQVFILGLPSRIASVW). Gln-214 lines the ethanolamine pocket. Over 229-233 (FGPKE) the chain is Cytoplasmic. The chain crosses the membrane as a helical span at residues 234–259 (VSTACATAVLGNQLGAAIGFLLPPVL). Residues 260–265 (VPNTQN) lie on the Extracellular side of the membrane. Residue Asn-265 is glycosylated (N-linked (GlcNAc...) asparagine). A helical membrane pass occupies residues 266–295 (NTDLLACNISTMFYGTSSVATFLCFLTIIA). Residues 296–331 (FKEKPQYPPSQAQAALQNSPPAKYSYKKSIRNLFRN) lie on the Cytoplasmic side of the membrane. The chain crosses the membrane as a helical span at residues 332–362 (VPFVLLLITYGIITGAFYSVSTLLNQMILTY). The Extracellular segment spans residues 363 to 366 (YKGE). Residues 367–395 (EVSAGKIGLTLVVAGMVGSILCGFWLDYT) traverse the membrane as a helical segment. Topologically, residues 396 to 397 (KI) are cytoplasmic. Residues 398 to 420 (YKQTTLIVYILSFLGMVIFTFTL) traverse the membrane as a helical segment. Over 421–423 (DLG) the chain is Extracellular. The helical transmembrane segment at 424–453 (YGIVVFVTGGVLGFFMTGYLPLGFEFAVEI) threads the bilayer. Residues 454–461 (TYPESEGT) are Cytoplasmic-facing. The helical transmembrane segment at 462–487 (SSGLLNAAAQIFGILFTLAQGKLTTD) threads the bilayer. An ethanolamine-binding site is contributed by Gln-471. Gln-471 contributes to the choline binding site. Over 488 to 489 (YS) the chain is Extracellular. A helical membrane pass occupies residues 490–512 (PKAGNIFLCVWLFLGIILTALIK). The Cytoplasmic portion of the chain corresponds to 513–560 (SDLRRHNINIGIANGDIKAVPVEDTVEDSPTDKESKTIVMSKQSESAI). Positions 537–560 (TVEDSPTDKESKTIVMSKQSESAI) are disordered. Ser-541 is subject to Phosphoserine. Over residues 550–560 (IVMSKQSESAI) the composition is skewed to polar residues.

This sequence belongs to the major facilitator superfamily. Feline leukemia virus subgroup C receptor (TC 2.A.1.28.1) family.

The protein localises to the cell membrane. The enzyme catalyses choline(out) = choline(in). It carries out the reaction ethanolamine(in) = ethanolamine(out). The catalysed reaction is heme b(in) = heme b(out). In terms of biological role, uniporter that mediates the transport of extracellular choline and ethanolamine into cells, thereby playing a key role in phospholipid biosynthesis. Choline and ethanolamine are the precursors of phosphatidylcholine and phosphatidylethanolamine, respectively, the two most abundant phospholipids. Transport is not coupled with proton transport and is exclusively driven by the choline (or ethanolamine) gradient across the plasma membrane. Also acts as a heme b transporter that mediates heme efflux from the cytoplasm to the extracellular compartment. Functionally, (Microbial infection) Confers susceptibility to Feline leukemia virus subgroup C (FeLV-C) infection, which is associated with fatal erythroid aplasia, also known as aplastic anemia. The sequence is that of Choline/ethanolamine transporter FLVCR1 (FLVCR1) from Felis catus (Cat).